Reading from the N-terminus, the 479-residue chain is Glycerol kinase 5 (479 aa).

The ATP site is built by serine 20 and serine 21. Positions 90, 267, and 268 each coordinate glycerol. Threonine 289, glycine 332, and glycine 432 together coordinate ATP.

The protein belongs to the FGGY kinase family.

The protein resides in the cytoplasm. The enzyme catalyses glycerol + ATP = sn-glycerol 3-phosphate + ADP + H(+). Its pathway is polyol metabolism; glycerol degradation via glycerol kinase pathway; sn-glycerol 3-phosphate from glycerol: step 1/1. In terms of biological role, skin-specific kinase that plays a key role in glycerol metabolism, catalyzing its phosphorylation to produce sn-glycerol 3-phosphate. Involved in skin-specific regulation of sterol regulatory element-binding protein (SREBP) processing and lipid biosynthesis. The polypeptide is Glycerol kinase 5 (gk5) (Xenopus laevis (African clawed frog)).